Consider the following 241-residue polypeptide: uncharacterized protein (241 aa).

Helical transmembrane passes span 12–32, 39–59, 89–109, 117–137, 152–172, 180–200, and 215–235; these read ITEI…LLLL, LLWL…EMKF, VYDV…ICYT, YYTF…NCVV, LFEY…ATML, IHFY…WFVY, and YVEA…SPLI.

This sequence belongs to the mimivirus L68/R809 family.

It localises to the membrane. This is an uncharacterized protein from Acanthamoeba polyphaga mimivirus (APMV).